The following is a 29-amino-acid chain: Cytochrome b6-f complex subunit 8 (29 aa).

A helical membrane pass occupies residues 3–23 (IVSLAWAGLMVVFTFSLSLVV).

Belongs to the PetN family. The 4 large subunits of the cytochrome b6-f complex are cytochrome b6, subunit IV (17 kDa polypeptide, PetD), cytochrome f and the Rieske protein, while the 4 small subunits are PetG, PetL, PetM and PetN. The complex functions as a dimer.

It is found in the plastid. Its subcellular location is the chloroplast thylakoid membrane. In terms of biological role, component of the cytochrome b6-f complex, which mediates electron transfer between photosystem II (PSII) and photosystem I (PSI), cyclic electron flow around PSI, and state transitions. This chain is Cytochrome b6-f complex subunit 8, found in Arabis hirsuta (Hairy rock-cress).